Consider the following 72-residue polypeptide: Putative membrane protein insertion efficiency factor (72 aa).

The protein belongs to the UPF0161 family.

It localises to the cell inner membrane. Functionally, could be involved in insertion of integral membrane proteins into the membrane. This Amoebophilus asiaticus (strain 5a2) protein is Putative membrane protein insertion efficiency factor.